The chain runs to 105 residues: Large ribosomal subunit protein bL34m (105 aa).

The N-terminal 16 residues, 1–16 (MPLFARLCQPQSRRMF), are a transit peptide targeting the mitochondrion.

It belongs to the bacterial ribosomal protein bL34 family. As to quaternary structure, component of the mitochondrial large ribosomal subunit (mt-LSU). Mature yeast 74S mitochondrial ribosomes consist of a small (37S) and a large (54S) subunit. The 37S small subunit contains a 15S ribosomal RNA (15S mt-rRNA) and 34 different proteins. The 54S large subunit contains a 21S rRNA (21S mt-rRNA) and 46 different proteins.

The protein resides in the mitochondrion. Functionally, component of the mitochondrial ribosome (mitoribosome), a dedicated translation machinery responsible for the synthesis of mitochondrial genome-encoded proteins, including at least some of the essential transmembrane subunits of the mitochondrial respiratory chain. The mitoribosomes are attached to the mitochondrial inner membrane and translation products are cotranslationally integrated into the membrane. In Saccharomyces cerevisiae (strain ATCC 204508 / S288c) (Baker's yeast), this protein is Large ribosomal subunit protein bL34m.